A 448-amino-acid polypeptide reads, in one-letter code: Squalene synthase ERG9 (448 aa).

A helical transmembrane segment spans residues 428–448 (CNVVLFGIGALILSLIYFVLY).

It belongs to the phytoene/squalene synthase family. The cofactor is Mg(2+).

The protein localises to the endoplasmic reticulum membrane. It is found in the microsome. The enzyme catalyses 2 (2E,6E)-farnesyl diphosphate + NADPH + H(+) = squalene + 2 diphosphate + NADP(+). It carries out the reaction 2 (2E,6E)-farnesyl diphosphate + NADH + H(+) = squalene + 2 diphosphate + NAD(+). It functions in the pathway terpene metabolism; lanosterol biosynthesis; lanosterol from farnesyl diphosphate: step 1/3. Its function is as follows. Squalene synthase; part of the third module of ergosterol biosynthesis pathway that includes the late steps of the pathway. ERG9 produces squalene from 2 farnesyl pyrophosphate moieties. The third module or late pathway involves the ergosterol synthesis itself through consecutive reactions that mainly occur in the endoplasmic reticulum (ER) membrane. Firstly, the squalene synthase ERG9 catalyzes the condensation of 2 farnesyl pyrophosphate moieties to form squalene, which is the precursor of all steroids. Squalene synthase is crucial for balancing the incorporation of farnesyl diphosphate (FPP) into sterol and nonsterol isoprene synthesis. Secondly, the squalene epoxidase ERG1 catalyzes the stereospecific oxidation of squalene to (S)-2,3-epoxysqualene, which is considered to be a rate-limiting enzyme in steroid biosynthesis. Then, the lanosterol synthase ERG7 catalyzes the cyclization of (S)-2,3 oxidosqualene to lanosterol, a reaction that forms the sterol core. In the next steps, lanosterol is transformed to zymosterol through a complex process involving various demethylation, reduction and desaturation reactions. The lanosterol 14-alpha-demethylase ERG11 (also known as CYP51) catalyzes C14-demethylation of lanosterol to produce 4,4'-dimethyl cholesta-8,14,24-triene-3-beta-ol, which is critical for ergosterol biosynthesis. The C-14 reductase ERG24 reduces the C14=C15 double bond of 4,4-dimethyl-cholesta-8,14,24-trienol to produce 4,4-dimethyl-cholesta-8,24-dienol. 4,4-dimethyl-cholesta-8,24-dienol is substrate of the C-4 demethylation complex ERG25-ERG26-ERG27 in which ERG25 catalyzes the three-step monooxygenation required for the demethylation of 4,4-dimethyl and 4alpha-methylsterols, ERG26 catalyzes the oxidative decarboxylation that results in a reduction of the 3-beta-hydroxy group at the C-3 carbon to an oxo group, and ERG27 is responsible for the reduction of the keto group on the C-3. ERG28 has a role as a scaffold to help anchor ERG25, ERG26 and ERG27 to the endoplasmic reticulum and ERG29 regulates the activity of the iron-containing C4-methylsterol oxidase ERG25. Then, the sterol 24-C-methyltransferase ERG6 catalyzes the methyl transfer from S-adenosyl-methionine to the C-24 of zymosterol to form fecosterol. The C-8 sterol isomerase ERG2 catalyzes the reaction which results in unsaturation at C-7 in the B ring of sterols and thus converts fecosterol to episterol. The sterol-C5-desaturase ERG3 then catalyzes the introduction of a C-5 double bond in the B ring to produce 5-dehydroepisterol. The C-22 sterol desaturase ERG5 further converts 5-dehydroepisterol into ergosta-5,7,22,24(28)-tetraen-3beta-ol by forming the C-22(23) double bond in the sterol side chain. Finally, ergosta-5,7,22,24(28)-tetraen-3beta-ol is substrate of the C-24(28) sterol reductase ERG4 to produce ergosterol. This Candida albicans (strain SC5314 / ATCC MYA-2876) (Yeast) protein is Squalene synthase ERG9.